A 624-amino-acid polypeptide reads, in one-letter code: Alpha-mannosidase I MNS4 (624 aa).

At 1-7 the chain is on the cytoplasmic side; sequence MDSNFKW. Residues 8-28 traverse the membrane as a helical; Signal-anchor for type II membrane protein segment; it reads LLFAILISLTFSGFVLHHGVL. Topologically, residues 29-624 are lumenal; that stretch reads AESVKPDEAK…ETDDQRSYSS (596 aa). The N-linked (GlcNAc...) asparagine glycan is linked to N115. The active-site Proton donor is the E122. Residue D262 is part of the active site. E355 serves as the catalytic Proton donor. Residue E376 is part of the active site. Residue T466 participates in Ca(2+) binding. The N-linked (GlcNAc...) asparagine glycan is linked to N494. Positions 574 to 624 are disordered; it reads QTVEKRPQEEEGFTSQSEPIMTISGGSSNDQTGQELTLLESETDDQRSYSS. Residues 586 to 608 show a composition bias toward polar residues; the sequence is FTSQSEPIMTISGGSSNDQTGQE.

This sequence belongs to the glycosyl hydrolase 47 family. Ca(2+) is required as a cofactor.

It localises to the endoplasmic reticulum membrane. It functions in the pathway protein modification; protein glycosylation. In terms of biological role, can convert Man(9)GlcNAc(2) and Man(8)GlcNAc(2) into N-glycans with a terminal alpha-1,6-linked Man residue in the C-branch. Functions in the formation of unique N-glycan structures that are specifically recognized by components of the endoplasmic reticulum-associated degradation (ERAD) machinery, which leads to the degradation of misfolded glycoproteins. Most likely generates N-glycan signal on misfolded glycoproteins that is subsequently recognized by OS9. Required for ERAD of the heavily glycosylated and misfolded BRI1 variants BRI1-5 and BRI1-9. Does not seem to play role in N-glycan processing of correctly folded proteins destined for secretion. This Arabidopsis thaliana (Mouse-ear cress) protein is Alpha-mannosidase I MNS4 (MNS4).